The sequence spans 327 residues: tRNA uridine(34) hydroxylase (327 aa).

A Rhodanese domain is found at 130–224 (LDEDTVVLDT…YGKDPEVRGE (95 aa)). The active-site Cysteine persulfide intermediate is cysteine 184.

It belongs to the TrhO family.

It catalyses the reaction uridine(34) in tRNA + AH2 + O2 = 5-hydroxyuridine(34) in tRNA + A + H2O. Catalyzes oxygen-dependent 5-hydroxyuridine (ho5U) modification at position 34 in tRNAs. The sequence is that of tRNA uridine(34) hydroxylase from Streptococcus suis (strain 98HAH33).